A 330-amino-acid chain; its full sequence is Succinoglycan biosynthesis protein ExoA (330 aa).

3 helical membrane-spanning segments follow: residues 116 to 136, 260 to 280, and 299 to 319; these read ALAT…FSTF, IAFG…VGVW, and YGPL…AGFW.

Belongs to the glycosyltransferase 2 family.

It localises to the cell membrane. Its pathway is glycan metabolism; exopolysaccharide biosynthesis. Glycosyltransferase required for the synthesis of succinoglycan (EPS I). Needed for the addition of the second sugar (glucose). Catalyzes the formation of a beta-1,3 linkage with the galactose lipid carrier. This Rhizobium meliloti (strain 1021) (Ensifer meliloti) protein is Succinoglycan biosynthesis protein ExoA (exoA).